The sequence spans 538 residues: Cytosolic Fe-S cluster assembly factor NAR1 homolog (538 aa).

Cys-19, Cys-64, Cys-67, Cys-70, Cys-218, Cys-273, Cys-453, and Cys-457 together coordinate [4Fe-4S] cluster.

Belongs to the NARF family.

It localises to the cytoplasm. The protein localises to the nucleus. Component of the cytosolic Fe/S protein assembly machinery. Required for maturation of extramitochondrial Fe/S proteins. May play a role in the transfer of pre-assembled Fe/S clusters to target apoproteins. This Schizosaccharomyces pombe (strain 972 / ATCC 24843) (Fission yeast) protein is Cytosolic Fe-S cluster assembly factor NAR1 homolog.